A 198-amino-acid polypeptide reads, in one-letter code: Probable chorismate pyruvate-lyase (198 aa).

Residues arginine 76, leucine 114, and glutamate 172 each contribute to the substrate site.

The protein belongs to the UbiC family.

It is found in the cytoplasm. The catalysed reaction is chorismate = 4-hydroxybenzoate + pyruvate. The protein operates within cofactor biosynthesis; ubiquinone biosynthesis. Its function is as follows. Removes the pyruvyl group from chorismate, with concomitant aromatization of the ring, to provide 4-hydroxybenzoate (4HB) for the ubiquinone pathway. The chain is Probable chorismate pyruvate-lyase from Bordetella avium (strain 197N).